The sequence spans 304 residues: Acetylglutamate kinase (304 aa).

Residues 74 to 75 (GG), Arg96, and Asn201 contribute to the substrate site.

This sequence belongs to the acetylglutamate kinase family. ArgB subfamily.

It localises to the cytoplasm. It carries out the reaction N-acetyl-L-glutamate + ATP = N-acetyl-L-glutamyl 5-phosphate + ADP. Its pathway is amino-acid biosynthesis; L-arginine biosynthesis; N(2)-acetyl-L-ornithine from L-glutamate: step 2/4. In terms of biological role, catalyzes the ATP-dependent phosphorylation of N-acetyl-L-glutamate. The sequence is that of Acetylglutamate kinase from Alkalilimnicola ehrlichii (strain ATCC BAA-1101 / DSM 17681 / MLHE-1).